The following is an 87-amino-acid chain: Small ribosomal subunit protein bS20 (87 aa).

The disordered stretch occupies residues Met-1–Met-27.

Belongs to the bacterial ribosomal protein bS20 family.

Its function is as follows. Binds directly to 16S ribosomal RNA. In Aeromonas salmonicida (strain A449), this protein is Small ribosomal subunit protein bS20.